Consider the following 1058-residue polypeptide: Carbamoyl phosphate synthase large chain (1058 aa).

A carboxyphosphate synthetic domain region spans residues M1–E401. ATP is bound by residues R129, R169, G175, G176, R208, I210, E215, G241, I242, H243, Q284, and E298. Residues K133–V327 form the ATP-grasp 1 domain. Q284, E298, and N300 together coordinate Mg(2+). Mn(2+) is bound by residues Q284, E298, and N300. The oligomerization domain stretch occupies residues I402–S546. A carbamoyl phosphate synthetic domain region spans residues I547–Y929. One can recognise an ATP-grasp 2 domain in the interval E671–L861. R707, S746, I748, E752, G777, V778, H779, S780, Q820, and E832 together coordinate ATP. Residues Q820, E832, and N834 each coordinate Mg(2+). Positions 820, 832, and 834 each coordinate Mn(2+). The MGS-like domain maps to L930 to I1058. Positions L930–I1058 are allosteric domain.

This sequence belongs to the CarB family. In terms of assembly, composed of two chains; the small (or glutamine) chain promotes the hydrolysis of glutamine to ammonia, which is used by the large (or ammonia) chain to synthesize carbamoyl phosphate. Tetramer of heterodimers (alpha,beta)4. Mg(2+) is required as a cofactor. Mn(2+) serves as cofactor.

The enzyme catalyses hydrogencarbonate + L-glutamine + 2 ATP + H2O = carbamoyl phosphate + L-glutamate + 2 ADP + phosphate + 2 H(+). It catalyses the reaction hydrogencarbonate + NH4(+) + 2 ATP = carbamoyl phosphate + 2 ADP + phosphate + 2 H(+). It functions in the pathway amino-acid biosynthesis; L-arginine biosynthesis; carbamoyl phosphate from bicarbonate: step 1/1. Its pathway is pyrimidine metabolism; UMP biosynthesis via de novo pathway; (S)-dihydroorotate from bicarbonate: step 1/3. Functionally, large subunit of the glutamine-dependent carbamoyl phosphate synthetase (CPSase). CPSase catalyzes the formation of carbamoyl phosphate from the ammonia moiety of glutamine, carbonate, and phosphate donated by ATP, constituting the first step of 2 biosynthetic pathways, one leading to arginine and/or urea and the other to pyrimidine nucleotides. The large subunit (synthetase) binds the substrates ammonia (free or transferred from glutamine from the small subunit), hydrogencarbonate and ATP and carries out an ATP-coupled ligase reaction, activating hydrogencarbonate by forming carboxy phosphate which reacts with ammonia to form carbamoyl phosphate. This chain is Carbamoyl phosphate synthase large chain, found in Streptococcus equi subsp. zooepidemicus (strain H70).